Reading from the N-terminus, the 293-residue chain is Small ribosomal subunit protein uS3 (293 aa).

In terms of domain architecture, KH type-2 spans 39-107 (VREYLKAKLK…PVAVNIEEVR (69 aa)). Positions 210-293 (RNDLPAVETP…PATAADGKGE (84 aa)) are disordered. The span at 219–238 (PRPEEERRPRGPRRDGRPGG) shows a compositional bias: basic and acidic residues.

Belongs to the universal ribosomal protein uS3 family. Part of the 30S ribosomal subunit. Forms a tight complex with proteins S10 and S14.

In terms of biological role, binds the lower part of the 30S subunit head. Binds mRNA in the 70S ribosome, positioning it for translation. The protein is Small ribosomal subunit protein uS3 of Paracidovorax citrulli (strain AAC00-1) (Acidovorax citrulli).